The chain runs to 816 residues: Coiled-coil and C2 domain-containing protein 1-like (816 aa).

Residues 1 to 11 (MFSRKKPEPAK) show a composition bias toward basic and acidic residues. Disordered stretches follow at residues 1–135 (MFSR…TFLP), 157–176 (ANAKTAGDSGKARRFGRGLK), and 186–269 (AAGK…RQTD). Positions 25–47 (IPDDFDPSAGYGEDDGGDSDLEA) are enriched in acidic residues. The segment covering 73–85 (DLDKMIADSLRDV) has biased composition (basic and acidic residues). The segment covering 86 to 100 (SDDDDDDNLESDPDL) has biased composition (acidic residues). Over residues 122-131 (PPAASEEPVQ) the composition is skewed to low complexity. Residues 145-200 (IKQRLEMYKQAEANAKTAGDSGKARRFGRGLKTLKDLHRQAAAGKSINVDDIPPEV) are DM14 1. Residues 220–243 (PSTPASPPPVPSRAAPDPPTPGTP) show a composition bias toward pro residues. DM14 regions lie at residues 265–317 (SRQT…MPPP) and 365–419 (LQQR…LPVP). The stretch at 355-382 (LAAATNMLEALQQRLEKYQSVEAAAKAE) forms a coiled coil. The tract at residues 418–492 (VPPGFGPLPT…TRTSGNQQKN (75 aa)) is disordered. Residues 424-433 (PLPTADAAPV) are compositionally biased toward low complexity. Positions 434-449 (APTPSLPTSPTSPPPT) are enriched in pro residues. The span at 450–471 (ASTSAGGTPSSSSATTPTAPRK) shows a compositional bias: low complexity. The segment covering 483–492 (TRTSGNQQKN) has biased composition (polar residues). Positions 502–556 (LLERQKEFKLAAIEAKKAGEIDQAKEYLKIFKGFDSLLNAASSGLPVDLSTLPVP) are DM14 4. Positions 637–776 (RKNEPLPKFH…ETKCEIHDTY (140 aa)) constitute a C2 domain.

The protein belongs to the CC2D1 family. Interacts (via DM14 domains 1 and 3) with shrb; the interaction is direct and blocks access to the surface involved in shrb polymerization. This interaction may be required for the ESCRT-III complex role in multivesicular body formation.

The protein resides in the cytoplasm. It is found in the cytosol. Its subcellular location is the apicolateral cell membrane. It localises to the cell cortex. The protein localises to the endosome. Phosphatidyl inositol monophosphate binding protein involved in endosomal protein sorting through regulation of the endosomal sorting required for transport (ESCRT) pathway. Required for full activity of the ESCRT-III complex core component shrb/shrub, probably by preventing its inappropriate polymerisation. Required, but not essential, for the efficient generation of intraluminal vesicles (ILVs) in multivesicular bodies (MVBs). Involved in a late stage of the endosomal pathway targeting transmembrane proteins of the plasma membrane for lysosomal degradation. Plays a critical role in regulation of multiple signal transduction pathways, including the Notch and BMP/decapentaplegic (dpp) signaling pathways, through targeting of membrane bound receptors to multivesicular bodies, isolating them from the cytoplasm and targeting them for lysosomal degradation. Involved in targeting N/Notch for endosomal degradation, negatively regulating the Notch signaling pathway. Regulates Notch signaling in imaginal disk cells and follicle cells during oogenesis and multiple developmental processes, including development of wings, veins, legs, eyes and bristles. Restricts the activity of Notch to the dorsoventral (D/V) boundary of the wing imaginal disk. In external sensory organ development regulates Notch signaling during asymmetric cell division and differentiation of sensory organ precursor cells. May be involved in regulation of apoptosis and cell growth independent of Notch signaling. Involved in targeting tkv for endosomal degradation, negatively regulating the BMP/decapentaplegic (dpp) signaling pathway. Regulates the BMP/dpp signaling pathway in follicle cells during oogenesis, but not in imaginal disk cells during wing development. May be involved in differentiation or morphogenesis of peripodial epithelial cells in the developing imaginal disk. Involved in abscission of germline cells during oogenesis. This is Coiled-coil and C2 domain-containing protein 1-like from Drosophila melanogaster (Fruit fly).